Reading from the N-terminus, the 192-residue chain is Fe/S biogenesis protein NfuA (192 aa).

[4Fe-4S] cluster is bound by residues cysteine 149 and cysteine 152.

This sequence belongs to the NfuA family. As to quaternary structure, homodimer. [4Fe-4S] cluster serves as cofactor.

In terms of biological role, involved in iron-sulfur cluster biogenesis. Binds a 4Fe-4S cluster, can transfer this cluster to apoproteins, and thereby intervenes in the maturation of Fe/S proteins. Could also act as a scaffold/chaperone for damaged Fe/S proteins. In Shewanella sp. (strain MR-7), this protein is Fe/S biogenesis protein NfuA.